We begin with the raw amino-acid sequence, 119 residues long: Nascent polypeptide-associated complex protein (119 aa).

The NAC-A/B domain maps to 5–73; that stretch reads RMNSREMRRL…MREVPKEPEE (69 aa).

This sequence belongs to the NAC-alpha family. Homodimer. Interacts with the ribosome. Binds ribosomal RNA.

Contacts the emerging nascent chain on the ribosome. This Thermoplasma acidophilum (strain ATCC 25905 / DSM 1728 / JCM 9062 / NBRC 15155 / AMRC-C165) protein is Nascent polypeptide-associated complex protein.